The following is a 413-amino-acid chain: Arginine biosynthesis bifunctional protein ArgJ (413 aa).

The substrate site is built by Thr-160, Lys-186, Thr-197, Glu-284, Asn-408, and Ser-413. The Nucleophile role is filled by Thr-197.

It belongs to the ArgJ family. In terms of assembly, heterotetramer of two alpha and two beta chains.

Its subcellular location is the cytoplasm. The catalysed reaction is N(2)-acetyl-L-ornithine + L-glutamate = N-acetyl-L-glutamate + L-ornithine. The enzyme catalyses L-glutamate + acetyl-CoA = N-acetyl-L-glutamate + CoA + H(+). It participates in amino-acid biosynthesis; L-arginine biosynthesis; L-ornithine and N-acetyl-L-glutamate from L-glutamate and N(2)-acetyl-L-ornithine (cyclic): step 1/1. It functions in the pathway amino-acid biosynthesis; L-arginine biosynthesis; N(2)-acetyl-L-ornithine from L-glutamate: step 1/4. Its function is as follows. Catalyzes two activities which are involved in the cyclic version of arginine biosynthesis: the synthesis of N-acetylglutamate from glutamate and acetyl-CoA as the acetyl donor, and of ornithine by transacetylation between N(2)-acetylornithine and glutamate. The chain is Arginine biosynthesis bifunctional protein ArgJ from Burkholderia pseudomallei (strain 1710b).